Reading from the N-terminus, the 266-residue chain is Glucosamine-6-phosphate deaminase (266 aa).

Aspartate 72 serves as the catalytic Proton acceptor; for enolization step. Aspartate 141 serves as the catalytic For ring-opening step. Residue histidine 143 is the Proton acceptor; for ring-opening step of the active site. The For ring-opening step role is filled by glutamate 148.

This sequence belongs to the glucosamine/galactosamine-6-phosphate isomerase family. NagB subfamily. Homohexamer; trimer of disulfide-linked dimers.

The enzyme catalyses alpha-D-glucosamine 6-phosphate + H2O = beta-D-fructose 6-phosphate + NH4(+). Its pathway is amino-sugar metabolism; N-acetylneuraminate degradation; D-fructose 6-phosphate from N-acetylneuraminate: step 5/5. With respect to regulation, allosterically activated by N-acetylglucosamine 6-phosphate (GlcNAc6P). In terms of biological role, catalyzes the reversible isomerization-deamination of glucosamine 6-phosphate (GlcN6P) to form fructose 6-phosphate (Fru6P) and ammonium ion. In Escherichia coli O6:H1 (strain CFT073 / ATCC 700928 / UPEC), this protein is Glucosamine-6-phosphate deaminase.